A 318-amino-acid chain; its full sequence is Thymidylate synthase (318 aa).

DUMP-binding positions include Arg26 and 181-182 (RR). The active-site Nucleophile is the Cys201. Residues 221 to 224 (RSAD), Asn232, and 262 to 264 (HIY) each bind dUMP. Asp224 serves as a coordination point for (6R)-5,10-methylene-5,6,7,8-tetrahydrofolate. Residue Ala317 participates in (6R)-5,10-methylene-5,6,7,8-tetrahydrofolate binding.

The protein belongs to the thymidylate synthase family. Bacterial-type ThyA subfamily. In terms of assembly, homodimer.

It localises to the cytoplasm. It catalyses the reaction dUMP + (6R)-5,10-methylene-5,6,7,8-tetrahydrofolate = 7,8-dihydrofolate + dTMP. Its pathway is pyrimidine metabolism; dTTP biosynthesis. Catalyzes the reductive methylation of 2'-deoxyuridine-5'-monophosphate (dUMP) to 2'-deoxythymidine-5'-monophosphate (dTMP) while utilizing 5,10-methylenetetrahydrofolate (mTHF) as the methyl donor and reductant in the reaction, yielding dihydrofolate (DHF) as a by-product. This enzymatic reaction provides an intracellular de novo source of dTMP, an essential precursor for DNA biosynthesis. This chain is Thymidylate synthase, found in Staphylococcus haemolyticus (strain JCSC1435).